The following is a 510-amino-acid chain: NAD(P)H-quinone oxidoreductase subunit 2 A, chloroplastic (510 aa).

A run of 13 helical transmembrane segments spans residues leucine 24–leucine 44, isoleucine 57–phenylalanine 77, isoleucine 99–isoleucine 119, methionine 124–cysteine 144, leucine 149–tyrosine 169, tyrosine 183–glycine 203, proline 227–alanine 247, tryptophan 295–isoleucine 315, methionine 323–aspartate 343, tyrosine 354–leucine 374, alanine 395–phenylalanine 415, isoleucine 418–leucine 438, and methionine 484–isoleucine 504.

It belongs to the complex I subunit 2 family. As to quaternary structure, NDH is composed of at least 16 different subunits, 5 of which are encoded in the nucleus.

The protein resides in the plastid. The protein localises to the chloroplast thylakoid membrane. The enzyme catalyses a plastoquinone + NADH + (n+1) H(+)(in) = a plastoquinol + NAD(+) + n H(+)(out). The catalysed reaction is a plastoquinone + NADPH + (n+1) H(+)(in) = a plastoquinol + NADP(+) + n H(+)(out). NDH shuttles electrons from NAD(P)H:plastoquinone, via FMN and iron-sulfur (Fe-S) centers, to quinones in the photosynthetic chain and possibly in a chloroplast respiratory chain. The immediate electron acceptor for the enzyme in this species is believed to be plastoquinone. Couples the redox reaction to proton translocation, and thus conserves the redox energy in a proton gradient. This chain is NAD(P)H-quinone oxidoreductase subunit 2 A, chloroplastic, found in Spinacia oleracea (Spinach).